Consider the following 398-residue polypeptide: Na(+)/H(+) antiporter NhaA (398 aa).

Helical transmembrane passes span 8-28, 59-79, 96-116, 124-144, 154-174, 177-197, 202-222, 223-243, 261-281, 292-312, 328-348, and 362-382; these read FLQL…LALI, LLLW…GMEI, LPVI…SFII, AGWA…LSLL, VFLL…IALF, AELH…LLML, VMLL…VLKS, GVHA…IRGA, YFIL…GLSW, IIVG…WLAV, LFGL…IGGL, and LGIL…LRNA.

Belongs to the NhaA Na(+)/H(+) (TC 2.A.33) antiporter family.

The protein localises to the cell inner membrane. It carries out the reaction Na(+)(in) + 2 H(+)(out) = Na(+)(out) + 2 H(+)(in). Functionally, na(+)/H(+) antiporter that extrudes sodium in exchange for external protons. This is Na(+)/H(+) antiporter NhaA from Tolumonas auensis (strain DSM 9187 / NBRC 110442 / TA 4).